The chain runs to 527 residues: Peptide chain release factor 3 (527 aa).

Positions 11–278 constitute a tr-type G domain; the sequence is AKRRTFAIIS…GFVEWAPAPL (268 aa). GTP contacts are provided by residues 20–27, 87–91, and 141–144; these read SHPDAGKT, DTPGH, and NKMD.

It belongs to the TRAFAC class translation factor GTPase superfamily. Classic translation factor GTPase family. PrfC subfamily.

The protein localises to the cytoplasm. Functionally, increases the formation of ribosomal termination complexes and stimulates activities of RF-1 and RF-2. It binds guanine nucleotides and has strong preference for UGA stop codons. It may interact directly with the ribosome. The stimulation of RF-1 and RF-2 is significantly reduced by GTP and GDP, but not by GMP. The sequence is that of Peptide chain release factor 3 from Teredinibacter turnerae (strain ATCC 39867 / T7901).